The following is a 1525-amino-acid chain: Multidrug resistance-associated protein 1 (1525 aa).

Residues M1–F33 lie on the Extracellular side of the membrane. The chain crosses the membrane as a helical span at residues Q34–F54. The Cytoplasmic segment spans residues L55–K74. Residues T75–E95 traverse the membrane as a helical segment. Residues R96–I100 are Extracellular-facing. A helical transmembrane segment spans residues F101–T121. At F122 to Q133 the chain is on the cytoplasmic side. A helical transmembrane segment spans residues S134–R154. Topologically, residues S155–Y172 are extracellular. Residues V173–E193 form a helical membrane-spanning segment. Residues K194–V315 are Cytoplasmic-facing. The helical transmembrane segment at L316–L336 threads the bilayer. Positions F324–E607 constitute an ABC transmembrane type-1 1 domain. Topologically, residues L337–G362 are extracellular. Residues Y363–Y383 form a helical membrane-spanning segment. Residues F384 to Y439 are Cytoplasmic-facing. Residues I440–N460 traverse the membrane as a helical segment. The Extracellular segment spans residues L461 to P463. The helical transmembrane segment at S464–M484 threads the bilayer. At K485–A546 the chain is on the cytoplasmic side. A helical transmembrane segment spans residues M547–Y567. The Extracellular portion of the chain corresponds to V568–N589. The helical transmembrane segment at I590–V610 threads the bilayer. Residues S611 to M961 lie on the Cytoplasmic side of the membrane. In terms of domain architecture, ABC transporter 1 spans I641–T865. G675–S682 is a binding site for ATP. Composition is skewed to polar residues over residues Q871–S882 and S908–E928. 2 disordered regions span residues Q871–N891 and S908–Q930. The chain crosses the membrane as a helical span at residues K962 to A982. The ABC transmembrane type-1 2 domain maps to S969–T1250. The Extracellular segment spans residues S983–S1019. Residues Q1020 to R1040 form a helical membrane-spanning segment. Residues H1041–P1083 are Cytoplasmic-facing. The helical transmembrane segment at I1084–L1104 threads the bilayer. Position 1105 (A1105) is a topological domain, extracellular. A helical membrane pass occupies residues T1106–F1126. The Cytoplasmic portion of the chain corresponds to Y1127–L1197. The helical transmembrane segment at E1198–K1218 threads the bilayer. Over L1219–S1220 the chain is Extracellular. Residues P1221 to L1241 traverse the membrane as a helical segment. Over V1242–A1525 the chain is Cytoplasmic. The ABC transporter 2 domain maps to F1289 to D1521. G1321–S1328 lines the ATP pocket.

Belongs to the ABC transporter superfamily. ABCC family. Conjugate transporter (TC 3.A.1.208) subfamily.

It is found in the cell membrane. It catalyses the reaction ATP + H2O + xenobioticSide 1 = ADP + phosphate + xenobioticSide 2.. It carries out the reaction an S-substituted glutathione(in) + ATP + H2O = an S-substituted glutathione(out) + ADP + phosphate + H(+). The catalysed reaction is sphing-4-enine 1-phosphate(in) + ATP + H2O = sphing-4-enine 1-phosphate(out) + ADP + phosphate + H(+). The enzyme catalyses leukotriene C4(in) + ATP + H2O = leukotriene C4(out) + ADP + phosphate + H(+). It catalyses the reaction 17beta-estradiol 17-O-(beta-D-glucuronate)(in) + ATP + H2O = 17beta-estradiol 17-O-(beta-D-glucuronate)(out) + ADP + phosphate + H(+). It carries out the reaction 2',3'-cGAMP(in) + ATP + H2O = 2',3'-cGAMP(out) + ADP + phosphate + H(+). Its function is as follows. Mediates export of organic anions and drugs from the cytoplasm. Mediates ATP-dependent transport of glutathione and glutathione conjugates, leukotriene C4, estradiol-17-beta-o-glucuronide and other xenobiotics. Hydrolyzes ATP with low efficiency. Mediates ATP-dependent, GSH-independent cyclic GMP-AMP (cGAMP) export. Thus, by limiting intracellular cGAMP concentrations negatively regulates the cGAS-STING pathway. The sequence is that of Multidrug resistance-associated protein 1 from Gallus gallus (Chicken).